We begin with the raw amino-acid sequence, 228 residues long: Protein K8.1 (228 aa).

The signal sequence occupies residues 1 to 26 (MSSTQIRTEIPVALLILCLCLVACHA). 4 N-linked (GlcNAc...) asparagine; by host glycosylation sites follow: N55, N60, N70, and N85. Residues 77-113 (GSPSSEYPNVSVSVEDTSASGSGEDAIDESGSGEEER) are disordered. A compositionally biased stretch (polar residues) spans 78 to 97 (SPSSEYPNVSVSVEDTSASG). The helical transmembrane segment at 197-217 (LYILWAVGLLLGLVLILYLCV) threads the bilayer.

Its subcellular location is the host membrane. The sequence is that of Protein K8.1 (K8.1) from Human herpesvirus 8 type P (isolate GK18) (HHV-8).